A 692-amino-acid chain; its full sequence is Serine/threonine-protein kinase Nek8 (692 aa).

A Protein kinase domain is found at 4–258 (YERIRVVGRG…LSHIMAQPLC (255 aa)). Residues 10-18 (VGRGAFGIV) and K33 each bind ATP. D128 acts as the Proton acceptor in catalysis. T162 carries the post-translational modification Phosphothreonine; by autocatalysis. Residues 277 to 301 (AEKSVAPSNTGSRTTSVRCRGIPRG) form a disordered region. Positions 282-293 (APSNTGSRTTSV) are enriched in polar residues. RCC1 repeat units follow at residues 312–350 (SSVY…VTRS), 410–461 (GIIM…LSTE), 462–513 (RELF…LTVP), 580–631 (GDCY…IGAE), and 632–684 (SEVY…AVRS).

The protein belongs to the protein kinase superfamily. NEK Ser/Thr protein kinase family. NIMA subfamily. In terms of assembly, interacts with PKD2; may regulate PKD2 targeting to the cilium. Interacts with ANKS6. Component of a complex containing at least ANKS6, INVS, NEK8 and NPHP3. ANKS6 may organize complex assembly by linking INVS and NPHP3 to NEK8 and INVS may target the complex to the proximal ciliary axoneme. Interacts with ANKS3. It depends on Mg(2+) as a cofactor. In terms of tissue distribution, highest expression in thyroid, adrenal gland and skin. Low levels in spleen, colon and uterus. Overexpressed in breast tumors, with highest expression in infiltrating ductal carcinomas and moderate levels in mucinous adenocarcinoma.

Its subcellular location is the cytoplasm. The protein resides in the cytoskeleton. The protein localises to the cell projection. It localises to the cilium. It is found in the microtubule organizing center. Its subcellular location is the centrosome. The protein resides in the cilium axoneme. The enzyme catalyses L-seryl-[protein] + ATP = O-phospho-L-seryl-[protein] + ADP + H(+). It catalyses the reaction L-threonyl-[protein] + ATP = O-phospho-L-threonyl-[protein] + ADP + H(+). In terms of biological role, required for renal tubular integrity. May regulate local cytoskeletal structure in kidney tubule epithelial cells. May regulate ciliary biogenesis through targeting of proteins to the cilia. Plays a role in organogenesis, and is involved in the regulation of the Hippo signaling pathway. This Homo sapiens (Human) protein is Serine/threonine-protein kinase Nek8 (NEK8).